The following is a 28-amino-acid chain: 3-phytase B (28 aa).

Residues R1–K28 form a disordered region. The active-site Nucleophile is the H17.

The protein belongs to the histidine acid phosphatase family.

The catalysed reaction is 1D-myo-inositol hexakisphosphate + H2O = 1D-myo-inositol 1,2,4,5,6-pentakisphosphate + phosphate. In terms of biological role, catalyzes the hydrolysis of inorganic orthophosphate from phytate. This is 3-phytase B (phyB) from Aspergillus ficuum.